The following is a 162-amino-acid chain: 2-C-methyl-D-erythritol 2,4-cyclodiphosphate synthase (162 aa).

A divalent metal cation contacts are provided by Asp-10 and His-12. Residues Asp-10–His-12 and His-36–Ser-37 contribute to the 4-CDP-2-C-methyl-D-erythritol 2-phosphate site. A divalent metal cation is bound at residue His-44. Residues Asp-58–Gly-60, Phe-63–Asp-67, Ala-102–Ala-108, Thr-134–Glu-137, Phe-141, and Arg-144 contribute to the 4-CDP-2-C-methyl-D-erythritol 2-phosphate site.

The protein belongs to the IspF family. In terms of assembly, homotrimer. The cofactor is a divalent metal cation.

It catalyses the reaction 4-CDP-2-C-methyl-D-erythritol 2-phosphate = 2-C-methyl-D-erythritol 2,4-cyclic diphosphate + CMP. It participates in isoprenoid biosynthesis; isopentenyl diphosphate biosynthesis via DXP pathway; isopentenyl diphosphate from 1-deoxy-D-xylulose 5-phosphate: step 4/6. Involved in the biosynthesis of isopentenyl diphosphate (IPP) and dimethylallyl diphosphate (DMAPP), two major building blocks of isoprenoid compounds. Catalyzes the conversion of 4-diphosphocytidyl-2-C-methyl-D-erythritol 2-phosphate (CDP-ME2P) to 2-C-methyl-D-erythritol 2,4-cyclodiphosphate (ME-CPP) with a corresponding release of cytidine 5-monophosphate (CMP). This Chromohalobacter salexigens (strain ATCC BAA-138 / DSM 3043 / CIP 106854 / NCIMB 13768 / 1H11) protein is 2-C-methyl-D-erythritol 2,4-cyclodiphosphate synthase.